Here is a 371-residue protein sequence, read N- to C-terminus: Ferrochelatase (371 aa).

Residues His218 and Glu299 each coordinate Fe cation.

The protein belongs to the ferrochelatase family.

The protein localises to the cytoplasm. The enzyme catalyses heme b + 2 H(+) = protoporphyrin IX + Fe(2+). It functions in the pathway porphyrin-containing compound metabolism; protoheme biosynthesis; protoheme from protoporphyrin-IX: step 1/1. Its function is as follows. Catalyzes the ferrous insertion into protoporphyrin IX. In Cupriavidus taiwanensis (strain DSM 17343 / BCRC 17206 / CCUG 44338 / CIP 107171 / LMG 19424 / R1) (Ralstonia taiwanensis (strain LMG 19424)), this protein is Ferrochelatase.